Here is a 692-residue protein sequence, read N- to C-terminus: Ena/VASP-like protein (692 aa).

Residues 1–112 enclose the WH1 domain; sequence MSEQSICQAR…NAMLFALNIM (112 aa). Disordered regions lie at residues 116-310, 466-518, and 531-650; these read DGGP…VQKN, SAAM…YEES, and KLRK…NDVS. Composition is skewed to polar residues over residues 123–132 and 159–169; these read RQAQNIQNGP and STTVSTLQINV. A compositionally biased stretch (low complexity) spans 214–226; the sequence is SSKSTNKSSNRTS. Positions 231-267 are enriched in polar residues; it reads LQNSHCGSEPSTSQSSAFSPIRPSNGTVSRSIKQISL. Low complexity-rich tracts occupy residues 288 to 310 and 466 to 479; these read PSLS…VQKN and SAAM…APAP. Residues 480–506 are compositionally biased toward pro residues; sequence ASGPPPPPPPGPPPPSGGTPPPAPPLP. Positions 522–542 are EVH2 block A; that stretch reads GLAAALAGAKLRKVQRPEDGS. Positions 522–689 are EVH2; the sequence is GLAAALAGAK…DAIRQELSRI (168 aa). The short motif at 531-534 is the KLKR element; the sequence is KLRK. The segment at 563-580 is EVH2 block B; sequence GGLMEEMNKLLAKRRKAA. Residues 597–617 are compositionally biased toward polar residues; it reads EDASLSSSPVTRGPTPQNSSD. Basic and acidic residues predominate over residues 618 to 628; sequence LGKKPWERSNS. Residues 655-689 form an EVH2 block C region; sequence DFDRMKQEILEEVVRELHKVKEEIIDAIRQELSRI.

Belongs to the Ena/VASP family. As to expression, during embryonic and tadpole development, expressed in the cement gland, brain, neural tube, myotome and neural placodes, including the otic, lateral line and olfactory placodes. All isoforms show similar spatial expression patterns.

The protein resides in the cytoplasm. Its subcellular location is the cytoskeleton. The protein localises to the stress fiber. It localises to the cell projection. It is found in the lamellipodium. Its function is as follows. Ena/VASP proteins are actin-associated proteins involved in a range of processes dependent on cytoskeleton remodeling and cell polarity such as axon guidance and lamellipodial and filopodial dynamics in migrating cells. Evl enhances actin nucleation and polymerization. The sequence is that of Ena/VASP-like protein from Xenopus laevis (African clawed frog).